A 28-amino-acid chain; its full sequence is DCIPGGENCDVFRPYRCCSGYCILLLCA.

3 cysteine pairs are disulfide-bonded: cysteine 2-cysteine 18, cysteine 9-cysteine 22, and cysteine 17-cysteine 27. Residue proline 4 is modified to 4-hydroxyproline; partial. 4-carboxyglutamate; partial is present on glutamate 7. A 4-hydroxyproline; partial modification is found at proline 14.

As to expression, expressed by the venom duct.

The protein localises to the secreted. May inhibit sodium (Nav) or calcium channels (Cav). The polypeptide is Conotoxin de7b (Conasprella delessertii (Sozon's cone)).